Reading from the N-terminus, the 440-residue chain is Ribosomal protein uS12 methylthiotransferase RimO (440 aa).

In terms of domain architecture, MTTase N-terminal spans 1 to 117 (MKVHLTSLGC…VIEAVAGKES (117 aa)). Cys-10, Cys-46, Cys-80, Cys-155, Cys-159, and Cys-162 together coordinate [4Fe-4S] cluster. Positions 141–371 (CATPHTVYVK…MTAQIDISSR (231 aa)) constitute a Radical SAM core domain. The 67-residue stretch at 374–440 (AKRVGSREPV…SAYDLTGEAQ (67 aa)) folds into the TRAM domain.

The protein belongs to the methylthiotransferase family. RimO subfamily. [4Fe-4S] cluster serves as cofactor.

It localises to the cytoplasm. It carries out the reaction L-aspartate(89)-[ribosomal protein uS12]-hydrogen + (sulfur carrier)-SH + AH2 + 2 S-adenosyl-L-methionine = 3-methylsulfanyl-L-aspartate(89)-[ribosomal protein uS12]-hydrogen + (sulfur carrier)-H + 5'-deoxyadenosine + L-methionine + A + S-adenosyl-L-homocysteine + 2 H(+). In terms of biological role, catalyzes the methylthiolation of an aspartic acid residue of ribosomal protein uS12. This chain is Ribosomal protein uS12 methylthiotransferase RimO, found in Desulfosudis oleivorans (strain DSM 6200 / JCM 39069 / Hxd3) (Desulfococcus oleovorans).